A 444-amino-acid polypeptide reads, in one-letter code: uncharacterized protein (444 aa).

Helical transmembrane passes span 9–29, 42–62, 82–102, 104–126, 136–156, 164–184, 193–213, 217–237, 263–283, 295–315, 324–344, 347–367, 387–407, and 411–431; these read LIVSLLLGAILVPINSTMIAV, IASITWVVTVYLIVMAVTQPI, LFLIASLGCALSPSLLLLIVF, ALQAVGGALLTPNSIAIIRHVVS, FFGLGAGLGAALGPFIGSILI, IFWVNIPFLAIALFTALTMFP, APLDIIGSLLLAGSIVSIILL, EAPWGYTVYSVLILLFVPLFF, LSVLLSNLMMYAVLLIMPLFM, GMALSVFSIFMSASNWVGAQL, IIFLSFAMMAGANLLFLLLSS, SVLFLMLSLILGGLASGVGLT, GIFSTFRYFGSIISSALIGLI, and HTLFMILFAVSIIGVFVSLGI.

It belongs to the major facilitator superfamily. TCR/Tet family.

The protein localises to the cell membrane. This is an uncharacterized protein from Bacillus subtilis (strain 168).